Consider the following 415-residue polypeptide: Tyrosine--tRNA ligase (415 aa).

Residues 54–63 (PTGTDIHIGH) carry the 'HIGH' region motif. The 'KMSKS' region signature appears at 248–252 (KMSKS). ATP is bound at residue lysine 251. In terms of domain architecture, S4 RNA-binding spans 351 to 415 (AKAFYLFSKM…GKKKFLRVST (65 aa)).

Belongs to the class-I aminoacyl-tRNA synthetase family. TyrS type 2 subfamily. As to quaternary structure, homodimer.

Its subcellular location is the cytoplasm. It catalyses the reaction tRNA(Tyr) + L-tyrosine + ATP = L-tyrosyl-tRNA(Tyr) + AMP + diphosphate + H(+). Catalyzes the attachment of tyrosine to tRNA(Tyr) in a two-step reaction: tyrosine is first activated by ATP to form Tyr-AMP and then transferred to the acceptor end of tRNA(Tyr). The sequence is that of Tyrosine--tRNA ligase from Prochlorococcus marinus (strain NATL2A).